A 333-amino-acid polypeptide reads, in one-letter code: 4-hydroxy-3-methylbut-2-enyl diphosphate reductase (333 aa).

Cys20 is a binding site for [4Fe-4S] cluster. (2E)-4-hydroxy-3-methylbut-2-enyl diphosphate contacts are provided by His49 and His85. Dimethylallyl diphosphate contacts are provided by His49 and His85. 2 residues coordinate isopentenyl diphosphate: His49 and His85. Cys107 lines the [4Fe-4S] cluster pocket. His135 is a (2E)-4-hydroxy-3-methylbut-2-enyl diphosphate binding site. His135 provides a ligand contact to dimethylallyl diphosphate. Residue His135 coordinates isopentenyl diphosphate. The active-site Proton donor is the Glu137. Residue Thr176 participates in (2E)-4-hydroxy-3-methylbut-2-enyl diphosphate binding. Position 206 (Cys206) interacts with [4Fe-4S] cluster. (2E)-4-hydroxy-3-methylbut-2-enyl diphosphate is bound by residues Ser234, Ser235, Asn236, and Ser279. Positions 234, 235, 236, and 279 each coordinate dimethylallyl diphosphate. Isopentenyl diphosphate contacts are provided by Ser234, Ser235, Asn236, and Ser279.

The protein belongs to the IspH family. [4Fe-4S] cluster serves as cofactor.

It carries out the reaction isopentenyl diphosphate + 2 oxidized [2Fe-2S]-[ferredoxin] + H2O = (2E)-4-hydroxy-3-methylbut-2-enyl diphosphate + 2 reduced [2Fe-2S]-[ferredoxin] + 2 H(+). The enzyme catalyses dimethylallyl diphosphate + 2 oxidized [2Fe-2S]-[ferredoxin] + H2O = (2E)-4-hydroxy-3-methylbut-2-enyl diphosphate + 2 reduced [2Fe-2S]-[ferredoxin] + 2 H(+). Its pathway is isoprenoid biosynthesis; dimethylallyl diphosphate biosynthesis; dimethylallyl diphosphate from (2E)-4-hydroxy-3-methylbutenyl diphosphate: step 1/1. It participates in isoprenoid biosynthesis; isopentenyl diphosphate biosynthesis via DXP pathway; isopentenyl diphosphate from 1-deoxy-D-xylulose 5-phosphate: step 6/6. Catalyzes the conversion of 1-hydroxy-2-methyl-2-(E)-butenyl 4-diphosphate (HMBPP) into a mixture of isopentenyl diphosphate (IPP) and dimethylallyl diphosphate (DMAPP). Acts in the terminal step of the DOXP/MEP pathway for isoprenoid precursor biosynthesis. The sequence is that of 4-hydroxy-3-methylbut-2-enyl diphosphate reductase from Rhizobium etli (strain CIAT 652).